Here is a 399-residue protein sequence, read N- to C-terminus: Succinate--CoA ligase [ADP-forming] subunit beta (399 aa).

Residues 9 to 254 (KQVLAKYGVP…EDEEDPMELE (246 aa)) form the ATP-grasp domain. ATP contacts are provided by residues K46, 53–55 (GRG), E109, C112, and E117. Residues N209 and D223 each contribute to the Mg(2+) site. Substrate contacts are provided by residues N274 and 331 to 333 (GIM).

This sequence belongs to the succinate/malate CoA ligase beta subunit family. In terms of assembly, heterotetramer of two alpha and two beta subunits. Mg(2+) is required as a cofactor.

It catalyses the reaction succinate + ATP + CoA = succinyl-CoA + ADP + phosphate. It carries out the reaction GTP + succinate + CoA = succinyl-CoA + GDP + phosphate. The protein operates within carbohydrate metabolism; tricarboxylic acid cycle; succinate from succinyl-CoA (ligase route): step 1/1. Functionally, succinyl-CoA synthetase functions in the citric acid cycle (TCA), coupling the hydrolysis of succinyl-CoA to the synthesis of either ATP or GTP and thus represents the only step of substrate-level phosphorylation in the TCA. The beta subunit provides nucleotide specificity of the enzyme and binds the substrate succinate, while the binding sites for coenzyme A and phosphate are found in the alpha subunit. The polypeptide is Succinate--CoA ligase [ADP-forming] subunit beta (Rhodospirillum rubrum (strain ATCC 11170 / ATH 1.1.1 / DSM 467 / LMG 4362 / NCIMB 8255 / S1)).